An 869-amino-acid polypeptide reads, in one-letter code: Ribonucleoside-diphosphate reductase large chain 2 (869 aa).

Residues 1–92 form the ATP-cone domain; that stretch reads MYVIKRDGRK…ISNLHKQTTK (92 aa). ATP contacts are provided by residues 5 to 6, 11 to 17, Thr-53, and Asp-57; these read KR and EPVQFDK. GDP contacts are provided by Ser-202 and Ser-217. Cys-218 and Cys-443 are oxidised to a cystine. DTTP contacts are provided by residues 226-228, Lys-243, Arg-256, and 263-264; these read DSI and AG. A Phosphoserine modification is found at Ser-227. Residue Lys-387 forms a Glycyl lysine isopeptide (Lys-Gly) (interchain with G-Cter in ubiquitin) linkage. Asn-426 is a binding site for GDP. The Proton acceptor role is filled by Asn-426. Cys-428 serves as the catalytic Cysteine radical intermediate. Residues Glu-430 and 608–611 contribute to the GDP site; that span reads TAST. Glu-430 functions as the Proton acceptor in the catalytic mechanism. Residues 793 to 843 are disordered; that stretch reads SALTESSDNEKDASPVPSEQSSVSSAMSNVKLEDSVAPAVPTETIKEDSDE. Residues Ser-806, Ser-827, and Ser-868 each carry the phosphoserine modification. A compositionally biased stretch (low complexity) spans 806–820; that stretch reads SPVPSEQSSVSSAMS.

Belongs to the ribonucleoside diphosphate reductase large chain family. In terms of assembly, heterotetramer of two large (R1) and two small (R2) subunits. S.cerevisiae has two different R1 subunits (RNR1 and RNR3) and two different R2 subunits (RNR2 and RNR4). The functional form of the small subunits is a RNR2-RNR4 heterodimer, where RNR2 provides the iron-radical center and RNR4 is required for proper folding of RNR2 and assembly with the large subunits. Under normal growth conditions, the active form of the large subunits is a homodimer of the constitutively expressed RNR1. In damaged cells or cells arrested for DNA synthesis, the reductase consists of multiple species because of the association of the small subunits (RNR2-RNR4) with either the RNR1 homodimer or a heterodimer of RNR1 and the damage-inducible RNR3.

It is found in the cytoplasm. The enzyme catalyses a 2'-deoxyribonucleoside 5'-diphosphate + [thioredoxin]-disulfide + H2O = a ribonucleoside 5'-diphosphate + [thioredoxin]-dithiol. With respect to regulation, under complex allosteric control mediated by deoxynucleoside triphosphates and ATP binding to separate specificity and activation sites on the large subunit. The type of nucleotide bound at the specificity site determines substrate preference. It seems probable that ATP makes the enzyme reduce CDP and UDP, dGTP favors ADP reduction and dTTP favors GDP reduction. Stimulated by ATP and inhibited by dATP binding to the activity site. In terms of biological role, provides the precursors necessary for DNA synthesis. Catalyzes the biosynthesis of deoxyribonucleotides from the corresponding ribonucleotides. The protein is Ribonucleoside-diphosphate reductase large chain 2 (RNR3) of Saccharomyces cerevisiae (strain ATCC 204508 / S288c) (Baker's yeast).